We begin with the raw amino-acid sequence, 738 residues long: ATP-dependent RNA helicase rok1 (738 aa).

Disordered regions lie at residues 1-112 (MDAF…DEEV) and 145-176 (VASE…EQKK). Over residues 17 to 29 (ATPSSAQSSTRLP) the composition is skewed to polar residues. Basic and acidic residues predominate over residues 92–104 (SKEEKQEQERSGE). The Q motif signature appears at 190-218 (ELRSKYKISSRLAENIAEQGFTVPTEVQL). A Helicase ATP-binding domain is found at 231-447 (KAGESVEPDL…KSTIKERKEA (217 aa)). 244-251 (APTGSGKT) contacts ATP. The disordered stretch occupies residues 316 to 356 (VVEREDEDDDGDDSSSEDGDESSESEHEERPIAKKSKGKAP). Residues 319–338 (REDEDDDGDDSSSEDGDESS) show a composition bias toward acidic residues. Positions 394-397 (DEAD) match the DEAD box motif. In terms of domain architecture, Helicase C-terminal spans 487 to 655 (GLRQLLHPTA…SIQKWLLDAL (169 aa)). Positions 663–738 (KKELKKHGVK…GNESWDGLEN (76 aa)) are disordered. Over residues 697–706 (GFERRIENKK) the composition is skewed to basic and acidic residues.

This sequence belongs to the DEAD box helicase family. DDX52/ROK1 subfamily. As to quaternary structure, interacts with the U3 snoRNA and is associated with the 90S and 40S pre-ribosomes.

It localises to the nucleus. It is found in the nucleolus. The enzyme catalyses ATP + H2O = ADP + phosphate + H(+). Its function is as follows. ATP-dependent RNA helicase involved in 40S ribosomal subunit biogenesis. Required for the processing and cleavage of 35S pre-rRNA at sites A0, A1, and A2, leading to mature 18S rRNA. This is ATP-dependent RNA helicase rok1 (rok1) from Aspergillus clavatus (strain ATCC 1007 / CBS 513.65 / DSM 816 / NCTC 3887 / NRRL 1 / QM 1276 / 107).